The chain runs to 500 residues: Mucin-like protein 3 (500 aa).

The N-terminal stretch at 1–27 is a signal peptide; it reads MAQPTSGLYSTFGFFICLLFFPASWEA. Residues 28-429 lie on the Extracellular side of the membrane; it reads GANTFQELQK…GENNSFPVWA (402 aa). Disordered stretches follow at residues 55-198 and 275-324; these read THRA…SQKP and EGKT…PTAS. Over residues 58–71 the composition is skewed to basic and acidic residues; that stretch reads ASSDQKTSRQHPPD. The segment covering 76–89 has biased composition (polar residues); the sequence is TATQKAKNQCNTTR. Asparagine 108 is a glycosylation site (N-linked (GlcNAc...) asparagine). 2 stretches are compositionally biased toward basic and acidic residues: residues 111 to 123 and 132 to 142; these read VRHE…EKDL and ARNERSADDPR. N-linked (GlcNAc...) asparagine glycosylation is present at asparagine 148. Composition is skewed to polar residues over residues 159-178, 279-289, and 298-324; these read PRRN…TTKS, SPASESSSQAQ, and TSAS…PTAS. A helical transmembrane segment spans residues 430-450; sequence IVIVILMAVIILLVFIGLILL. Topologically, residues 451 to 500 are cytoplasmic; that stretch reads VSCASRARHVLTQNSEEPEPQPEDKGSRNSYPVYLMEQQNLNLNQIPSPP.

The protein resides in the cell membrane. Its subcellular location is the cytoplasm. Its function is as follows. May modulate NF-kappaB signaling and play a role in cell growth. The protein is Mucin-like protein 3 of Mus musculus (Mouse).